The primary structure comprises 1246 residues: Myosin-1 (1246 aa).

The interval 1-41 (MGHSRRPVGGEKKSRGFGRSKAVADVGDGRQTGGKPQVKKA) is disordered. One can recognise a Myosin motor domain in the interval 51–730 (IGVSDLTLLS…TLFALEAMRD (680 aa)). An ATP-binding site is contributed by 144–151 (GESGAGKT). S372 is subject to Phosphoserine. An actin-binding region spans residues 419–501 (SIGILDIYGF…PGVFAALNDA (83 aa)). 2 IQ domains span residues 734 to 754 (HNMA…RIEC) and 755 to 780 (AIRI…QGHK). The region spanning 788-976 (RRRMSLLGSR…TIHTSAGEPP (189 aa)) is the TH1 domain. The span at 956–970 (GSSNVDTYKSSTIHT) shows a compositional bias: polar residues. Disordered stretches follow at residues 956–1080 (GSSN…PKKP) and 1127–1246 (WTPQ…DDEW). Pro residues-rich tracts occupy residues 1033 to 1045 (APQP…PVPQ) and 1065 to 1078 (APPP…PAPK). The region spanning 1077–1138 (PKKPMAKVLY…PQAYLEEQKA (62 aa)) is the SH3 domain. 2 stretches are compositionally biased toward low complexity: residues 1151-1166 (TPAT…AKAK) and 1214-1228 (NSAS…LAEA). The span at 1229–1240 (LRQRQEAMHGKQ) shows a compositional bias: basic and acidic residues.

It belongs to the TRAFAC class myosin-kinesin ATPase superfamily. Myosin family. Phosphorylation of the TEDS site (Ser-372) is required for the polarization of the actin cytoskeleton. Phosphorylation probably activates the myosin-I ATPase activity.

It is found in the cytoplasm. Its subcellular location is the cytoskeleton. The protein localises to the actin patch. Functionally, type-I myosin implicated in the organization of the actin cytoskeleton. Required for proper actin cytoskeleton polarization. At the cell cortex, assembles in patch-like structures together with proteins from the actin-polymerizing machinery and promotes actin assembly. Functions as actin nucleation-promoting factor (NPF) for the Arp2/3 complex. Plays an important role in polarized growth, spore germination, hyphal morphogenesis, and septal wall formation. This chain is Myosin-1 (myoA), found in Aspergillus terreus (strain NIH 2624 / FGSC A1156).